Here is a 128-residue protein sequence, read N- to C-terminus: Holin-like protein CidA (128 aa).

Transmembrane regions (helical) follow at residues 4 to 24 (LLLT…INWV), 26 to 46 (ALLH…FTLL), 59 to 79 (GAAW…VGVI), and 88 to 108 (FGVS…VSTG).

It belongs to the CidA/LrgA family. CidA subfamily.

The protein localises to the cell membrane. Increases the activity of extracellular murein hydrolases possibly by mediating their export via hole formation. Inhibited by the antiholin-like proteins LrgAB. In an unstressed cell, the LrgAB products probably inhibit the function of the CidA protein. When a cell is stressed by the addition of antibiotics or by other factors in the environment, CidA possibly oligomerizes within the bacterial cell membrane, creating lesions that disrupt the proton motive force, which in turn results in loss of cell viability. These lesions are also hypothesized to regulate the subsequent cell lysis by either allowing the murein hydrolases access to the cell wall substrate and/or regulating their activity by a possible change in the cell wall pH that results from loss of membrane potential. This chain is Holin-like protein CidA, found in Bacillus subtilis (strain 168).